The chain runs to 248 residues: DNA polymerase sliding clamp (248 aa).

This sequence belongs to the PCNA family. As to quaternary structure, homotrimer. The subunits circularize to form a toroid; DNA passes through its center. Replication factor C (RFC) is required to load the toroid on the DNA.

Functionally, sliding clamp subunit that acts as a moving platform for DNA processing. Responsible for tethering the catalytic subunit of DNA polymerase and other proteins to DNA during high-speed replication. The polypeptide is DNA polymerase sliding clamp (Cenarchaeum symbiosum (strain A)).